Here is a 249-residue protein sequence, read N- to C-terminus: Sesquipedalian-1 (249 aa).

A PH domain is found at 17 to 113 (PVDNAGFLYK…WVKALSRASF (97 aa)). 2 disordered regions span residues 134 to 159 (GGMA…LAPV) and 194 to 219 (EATF…HGPL). Residues 140-152 (QPQPQSLPLPPSL) show a composition bias toward pro residues. Position 213 is a phosphoserine (Ser-213). The short motif at 223–235 (PFARLHECYGQEI) is the F&amp;H element.

Belongs to the sesquipedalian family. As to quaternary structure, forms homodimers and heterodimers with PHETA2. Interacts with OCRL and INPP5B. Interaction with OCRL may be important for endosomal morphology and function.

The protein resides in the early endosome. It is found in the recycling endosome. It localises to the golgi apparatus. Its subcellular location is the trans-Golgi network. The protein localises to the cytoplasmic vesicle. The protein resides in the clathrin-coated vesicle. Plays a role in endocytic trafficking. Required for receptor recycling from endosomes, both to the trans-Golgi network and the plasma membrane. This is Sesquipedalian-1 from Homo sapiens (Human).